A 473-amino-acid polypeptide reads, in one-letter code: ATP synthase subunit beta (473 aa).

An ATP-binding site is contributed by 153–160 (GGAGVGKT).

It belongs to the ATPase alpha/beta chains family. As to quaternary structure, F-type ATPases have 2 components, CF(1) - the catalytic core - and CF(0) - the membrane proton channel. CF(1) has five subunits: alpha(3), beta(3), gamma(1), delta(1), epsilon(1). CF(0) has three main subunits: a(1), b(2) and c(9-12). The alpha and beta chains form an alternating ring which encloses part of the gamma chain. CF(1) is attached to CF(0) by a central stalk formed by the gamma and epsilon chains, while a peripheral stalk is formed by the delta and b chains.

Its subcellular location is the cell inner membrane. The catalysed reaction is ATP + H2O + 4 H(+)(in) = ADP + phosphate + 5 H(+)(out). Its function is as follows. Produces ATP from ADP in the presence of a proton gradient across the membrane. The catalytic sites are hosted primarily by the beta subunits. This is ATP synthase subunit beta from Rickettsia akari (strain Hartford).